We begin with the raw amino-acid sequence, 179 residues long: RNA polymerase sigma-E factor (179 aa).

The Polymerase core binding signature appears at Asp36 to Trp49. The H-T-H motif DNA-binding region spans Thr130–His149.

Belongs to the sigma-70 factor family. ECF subfamily.

It localises to the cytoplasm. Its function is as follows. Sigma factors are initiation factors that promote the attachment of RNA polymerase to specific initiation sites and are then released. This sigma factor is required for normal cell wall integrity; it is recruited by RNA polymerase to transcribe genes with cell wall-related functions. The sequence is that of RNA polymerase sigma-E factor (sigE) from Streptomyces avermitilis (strain ATCC 31267 / DSM 46492 / JCM 5070 / NBRC 14893 / NCIMB 12804 / NRRL 8165 / MA-4680).